Reading from the N-terminus, the 87-residue chain is Small ribosomal subunit protein bS18B (87 aa).

It belongs to the bacterial ribosomal protein bS18 family. In terms of assembly, part of the 30S ribosomal subunit. Forms a tight heterodimer with protein bS6.

Its function is as follows. Binds as a heterodimer with protein bS6 to the central domain of the 16S rRNA, where it helps stabilize the platform of the 30S subunit. This is Small ribosomal subunit protein bS18B from Mycobacterium marinum (strain ATCC BAA-535 / M).